The sequence spans 142 residues: Large ribosomal subunit protein uL11 (142 aa).

This sequence belongs to the universal ribosomal protein uL11 family. In terms of assembly, part of the ribosomal stalk of the 50S ribosomal subunit. Interacts with L10 and the large rRNA to form the base of the stalk. L10 forms an elongated spine to which L12 dimers bind in a sequential fashion forming a multimeric L10(L12)X complex. Post-translationally, one or more lysine residues are methylated.

In terms of biological role, forms part of the ribosomal stalk which helps the ribosome interact with GTP-bound translation factors. This is Large ribosomal subunit protein uL11 from Mycobacteroides abscessus (strain ATCC 19977 / DSM 44196 / CCUG 20993 / CIP 104536 / JCM 13569 / NCTC 13031 / TMC 1543 / L948) (Mycobacterium abscessus).